Here is a 279-residue protein sequence, read N- to C-terminus: Ribosomal RNA small subunit methyltransferase J (279 aa).

Residues Glu-138 to Arg-139 and Asp-194 contribute to the S-adenosyl-L-methionine site.

This sequence belongs to the methyltransferase superfamily. RsmJ family.

It is found in the cytoplasm. It catalyses the reaction guanosine(1516) in 16S rRNA + S-adenosyl-L-methionine = N(2)-methylguanosine(1516) in 16S rRNA + S-adenosyl-L-homocysteine + H(+). Its function is as follows. Specifically methylates the guanosine in position 1516 of 16S rRNA. In Acinetobacter baumannii (strain ATCC 17978 / DSM 105126 / CIP 53.77 / LMG 1025 / NCDC KC755 / 5377), this protein is Ribosomal RNA small subunit methyltransferase J.